Reading from the N-terminus, the 266-residue chain is GTP-binding protein Rhes (266 aa).

Glycine 26–serine 33 provides a ligand contact to GTP. Positions tyrosine 48 to histidine 56 match the Effector region motif. GTP is bound by residues aspartate 73–asparagine 77 and asparagine 140–aspartate 143. The interaction with GNB1, GNB2 and GNB3 stretch occupies residues methionine 189–alanine 235. Cysteine 263 is modified (cysteine methyl ester). Cysteine 263 carries the S-farnesyl cysteine lipid modification. Residues threonine 264–glutamine 266 constitute a propeptide, removed in mature form.

It belongs to the small GTPase superfamily. RasD family. Monomer (Potential). Interacts with PIK3CA and UBE2I. Interacts with GNB1, GNB2 and GNB3. Interacts with HTT; interacts with mutant HTT (mHTT) with a much higher affinity than wild type HTT. In terms of processing, farnesylated. Farnesylation is required for membrane targeting. In terms of tissue distribution, pancreatic endocrine cells (islets of Langerhans).

It localises to the cell membrane. GTPase signaling protein that binds to and hydrolyzes GTP. Regulates signaling pathways involving G-proteins-coupled receptor and heterotrimeric proteins such as GNB1, GNB2 and GNB3. May be involved in selected striatal competencies, mainly locomotor activity and motor coordination. This Homo sapiens (Human) protein is GTP-binding protein Rhes (RASD2).